The sequence spans 212 residues: ATP-dependent dethiobiotin synthetase BioD (212 aa).

13-18 (GIGKTV) is a binding site for ATP. T17 serves as a coordination point for Mg(2+). K33 is an active-site residue. S37 is a substrate binding site. E100 lines the Mg(2+) pocket. Residues 100–103 (EGAG) and 184–186 (PLL) each bind ATP.

It belongs to the dethiobiotin synthetase family. Homodimer. Requires Mg(2+) as cofactor.

It is found in the cytoplasm. It carries out the reaction (7R,8S)-7,8-diammoniononanoate + CO2 + ATP = (4R,5S)-dethiobiotin + ADP + phosphate + 3 H(+). It participates in cofactor biosynthesis; biotin biosynthesis; biotin from 7,8-diaminononanoate: step 1/2. In terms of biological role, catalyzes a mechanistically unusual reaction, the ATP-dependent insertion of CO2 between the N7 and N8 nitrogen atoms of 7,8-diaminopelargonic acid (DAPA, also called 7,8-diammoniononanoate) to form a ureido ring. The sequence is that of ATP-dependent dethiobiotin synthetase BioD from Brucella melitensis biotype 2 (strain ATCC 23457).